Here is a 1944-residue protein sequence, read N- to C-terminus: uncharacterized protein (1944 aa).

The interval 908-999 is disordered; that stretch reads SQNLNFLKSK…SESEEESSNG (92 aa). Basic and acidic residues-rich tracts occupy residues 916–929 and 939–949; these read SKQE…ESAK and LSEKLNSDNHI. Residues 985–996 are compositionally biased toward acidic residues; that stretch reads SDEDTSESEEES. 1293 to 1300 is a binding site for ATP; sequence GPPGTGKT. The disordered stretch occupies residues 1824-1944; sequence QEAHKVKKRH…PPKVEHFKRK (121 aa). 2 stretches are compositionally biased toward basic and acidic residues: residues 1843–1852 and 1869–1891; these read GTERDEDIPN and KVTK…KIDE. Residues 1912–1922 are compositionally biased toward basic residues; the sequence is GHMKKSKKPKS.

The protein belongs to the DNA2/NAM7 helicase family.

It localises to the nucleus. This is an uncharacterized protein from Schizosaccharomyces pombe (strain 972 / ATCC 24843) (Fission yeast).